The chain runs to 191 residues: Early nodulin-like protein 8 (191 aa).

A signal peptide spans 1–22 (MGVMSLSKTMVVVVLQVMILLG). The Phytocyanin domain maps to 31 to 133 (TLYKVGDLDA…YQKLLVSVGT (103 aa)). A disulfide bond links cysteine 87 and cysteine 121. Asparagine 104 and asparagine 108 each carry an N-linked (GlcNAc...) asparagine glycan. A lipid anchor (GPI-anchor amidated serine) is attached at serine 165. Residues 166–191 (SASSSLISAFSTVAASLACAVVGAIM) constitute a propeptide, removed in mature form.

Belongs to the early nodulin-like (ENODL) family. As to expression, mostly expressed in seedlings and roots, and, to a lower extent, in leaves, flowers, stems and seeds.

Its subcellular location is the cell membrane. Its function is as follows. May act as a carbohydrate transporter. This is Early nodulin-like protein 8 from Arabidopsis thaliana (Mouse-ear cress).